The primary structure comprises 463 residues: tRNA-2-methylthio-N(6)-dimethylallyladenosine synthase (463 aa).

In terms of domain architecture, MTTase N-terminal spans 19-135 (GSYWITTFGC…LESLLNQVDS (117 aa)). The [4Fe-4S] cluster site is built by C28, C64, C98, C170, C174, and C177. Positions 156 to 393 (RDSSFCGWVN…NSLVENIAKE (238 aa)) constitute a Radical SAM core domain. The TRAM domain occupies 396-463 (QRYKNTSQEI…RPFSLTAKLL (68 aa)).

This sequence belongs to the methylthiotransferase family. MiaB subfamily. In terms of assembly, monomer. It depends on [4Fe-4S] cluster as a cofactor.

It localises to the cytoplasm. The enzyme catalyses N(6)-dimethylallyladenosine(37) in tRNA + (sulfur carrier)-SH + AH2 + 2 S-adenosyl-L-methionine = 2-methylsulfanyl-N(6)-dimethylallyladenosine(37) in tRNA + (sulfur carrier)-H + 5'-deoxyadenosine + L-methionine + A + S-adenosyl-L-homocysteine + 2 H(+). Functionally, catalyzes the methylthiolation of N6-(dimethylallyl)adenosine (i(6)A), leading to the formation of 2-methylthio-N6-(dimethylallyl)adenosine (ms(2)i(6)A) at position 37 in tRNAs that read codons beginning with uridine. This chain is tRNA-2-methylthio-N(6)-dimethylallyladenosine synthase, found in Prochlorococcus marinus (strain NATL1A).